Consider the following 184-residue polypeptide: Photosystem I assembly protein Ycf4 (184 aa).

2 consecutive transmembrane segments (helical) span residues 19–39 (ISNF…LLVG) and 57–77 (IIFF…LFIS).

The protein belongs to the Ycf4 family.

The protein localises to the plastid. It is found in the chloroplast thylakoid membrane. Its function is as follows. Seems to be required for the assembly of the photosystem I complex. The chain is Photosystem I assembly protein Ycf4 from Solanum bulbocastanum (Wild potato).